Reading from the N-terminus, the 663-residue chain is Spore germination protein GerIA (663 aa).

A compositionally biased stretch (basic residues) spans 1–13; sequence MIWNWLRKKKKSN. The disordered stretch occupies residues 1–175; it reads MIWNWLRKKK…SGGNSIYDFT (175 aa). Residues 47-56 are compositionally biased toward basic and acidic residues; it reads KNNEQKDSSQ. 3 stretches are compositionally biased toward low complexity: residues 57–72, 88–101, and 122–150; these read DKQQ…QDKQ and PKQG…QQSA. 5 helical membrane-spanning segments follow: residues 414 to 434, 451 to 471, 491 to 511, 541 to 561, and 578 to 598; these read IFVD…DFFI, ILRL…VAVL, AQVP…IDLL, AGLT…ASFI, and FLAF…IFLF.

Belongs to the GerABKA family.

It is found in the cell membrane. Required for inosine germination. The chain is Spore germination protein GerIA (gerIA) from Bacillus cereus.